Here is a 400-residue protein sequence, read N- to C-terminus: Cytohesin-3 (400 aa).

Positions 14-61 (EDLSLEEREELLDIRRRKKELIDDIERLKYEIAEVMTEIDNLTSVEES) form a coiled coil. An SEC7 domain is found at 77 to 206 (FNMDPKKGIQ…IIMLNTSLHN (130 aa)). Residues 265 to 381 (PDREGWLLKL…WMKSIKASIS (117 aa)) enclose the PH domain. Residues 273-281 (KLGGGRVKT), Arg285, Tyr296, Arg306, and Asn355 contribute to the a 1,2-diacyl-sn-glycero-3-phospho-(1D-myo-inositol-3,4,5-trisphosphate) site. The segment at 392 to 400 (RKRRIANKK) is C-terminal autoinhibitory region.

In terms of assembly, interacts with TAMALIN. Present in all tissues tested, with highest protein levels in brain and adrenal.

The protein resides in the cytoplasm. It localises to the cytosol. The protein localises to the cell membrane. In terms of biological role, promotes guanine-nucleotide exchange on ARF1. Promotes the activation of ARF factors through replacement of GDP with GTP. This is Cytohesin-3 (Cyth3) from Rattus norvegicus (Rat).